Consider the following 290-residue polypeptide: 4-diphosphocytidyl-2-C-methyl-D-erythritol kinase (290 aa).

Residue lysine 8 is part of the active site. 89–99 (PIGAGVGGGSS) provides a ligand contact to ATP. Aspartate 131 is a catalytic residue.

It belongs to the GHMP kinase family. IspE subfamily.

It carries out the reaction 4-CDP-2-C-methyl-D-erythritol + ATP = 4-CDP-2-C-methyl-D-erythritol 2-phosphate + ADP + H(+). It functions in the pathway isoprenoid biosynthesis; isopentenyl diphosphate biosynthesis via DXP pathway; isopentenyl diphosphate from 1-deoxy-D-xylulose 5-phosphate: step 3/6. Catalyzes the phosphorylation of the position 2 hydroxy group of 4-diphosphocytidyl-2C-methyl-D-erythritol. This Chlamydia felis (strain Fe/C-56) (Chlamydophila felis) protein is 4-diphosphocytidyl-2-C-methyl-D-erythritol kinase.